The primary structure comprises 463 residues: L-seryl-tRNA(Sec) selenium transferase (463 aa).

Lys295 bears the N6-(pyridoxal phosphate)lysine mark.

The protein belongs to the SelA family. In terms of assembly, homodecamer; pentamer of dimers. Binds only one seryl-tRNA(Sec) per dimer. The cofactor is pyridoxal 5'-phosphate.

It is found in the cytoplasm. It carries out the reaction L-seryl-tRNA(Sec) + selenophosphate + H(+) = L-selenocysteinyl-tRNA(Sec) + phosphate. Its pathway is aminoacyl-tRNA biosynthesis; selenocysteinyl-tRNA(Sec) biosynthesis; selenocysteinyl-tRNA(Sec) from L-seryl-tRNA(Sec) (bacterial route): step 1/1. Its function is as follows. Converts seryl-tRNA(Sec) to selenocysteinyl-tRNA(Sec) required for selenoprotein biosynthesis. The sequence is that of L-seryl-tRNA(Sec) selenium transferase from Salmonella schwarzengrund (strain CVM19633).